Here is a 202-residue protein sequence, read N- to C-terminus: Large ribosomal subunit protein uL5 (202 aa).

Low complexity predominate over residues 1–17 (MSAKAATKNATKVAVKA). The tract at residues 1 to 30 (MSAKAATKNATKVAVKAPEATTPVETKKSK) is disordered.

This sequence belongs to the universal ribosomal protein uL5 family. Component of the large ribosomal subunit.

The protein localises to the nucleus. It localises to the cytoplasm. In terms of biological role, component of the ribosome, a large ribonucleoprotein complex responsible for the synthesis of proteins in the cell. The small ribosomal subunit (SSU) binds messenger RNAs (mRNAs) and translates the encoded message by selecting cognate aminoacyl-transfer RNA (tRNA) molecules. The large subunit (LSU) contains the ribosomal catalytic site termed the peptidyl transferase center (PTC), which catalyzes the formation of peptide bonds, thereby polymerizing the amino acids delivered by tRNAs into a polypeptide chain. The nascent polypeptides leave the ribosome through a tunnel in the LSU and interact with protein factors that function in enzymatic processing, targeting, and the membrane insertion of nascent chains at the exit of the ribosomal tunnel. The sequence is that of Large ribosomal subunit protein uL5 (rpl11) from Dictyostelium discoideum (Social amoeba).